A 245-amino-acid polypeptide reads, in one-letter code: 1-(5-phosphoribosyl)-5-[(5-phosphoribosylamino)methylideneamino] imidazole-4-carboxamide isomerase (245 aa).

D7 (proton acceptor) is an active-site residue. The active-site Proton donor is the D129.

This sequence belongs to the HisA/HisF family.

It is found in the cytoplasm. The enzyme catalyses 1-(5-phospho-beta-D-ribosyl)-5-[(5-phospho-beta-D-ribosylamino)methylideneamino]imidazole-4-carboxamide = 5-[(5-phospho-1-deoxy-D-ribulos-1-ylimino)methylamino]-1-(5-phospho-beta-D-ribosyl)imidazole-4-carboxamide. The protein operates within amino-acid biosynthesis; L-histidine biosynthesis; L-histidine from 5-phospho-alpha-D-ribose 1-diphosphate: step 4/9. The sequence is that of 1-(5-phosphoribosyl)-5-[(5-phosphoribosylamino)methylideneamino] imidazole-4-carboxamide isomerase from Buchnera aphidicola subsp. Cinara cedri (strain Cc).